The following is a 544-amino-acid chain: MNRCAEAAAVAATVPGSGVGDSGLRPPMVPRQASFFPPPVPNPFVQQTRISAARRLQMILLGIILLPVRALLVGLVLLLAWPFAVISTVCCPKKLTHPISDWRRKITQPALKFLGRAMFFSMGFRVTVKGKVASPLEAPIFVVAPHSTFFDGIACVVAGLPSLVSRNENAQTPLVGRLLRALQPVLVSRVDPDSRKNTINEIKKRAMSGGEWPQILVFPEGTCTNRSCLITFKPGAFIPGVPVQPVLLRYPNKLDTVTWTWQGYTFIQLCVLTFCQLFTKVEVEFMPVQAPSEEERNDPVLFASRVRNLMAEALEIPVTDHTYEDCRLMISAGQLTLPMEAGLVEFTKISRKLKLDWDGIRKHLDEYASIASSAKGGRIGASSAKGGRIGPVSDVLRQLFALFDRNNDGSIDFREYVIGLAVLCNPANTEDIIQVAFKLFDVDEDGYITEEEFCTILQASLGVPDLNVSGLFREIAQGDSVSYEEFKSFALKHPEYAKIFTTYLDLQTCHVFSLPEDVQTAPSVASNKVSPESHEEGTSGKKVD.

Over 1-58 (MNRCAEAAAVAATVPGSGVGDSGLRPPMVPRQASFFPPPVPNPFVQQTRISAARRLQM) the chain is Cytoplasmic. Residues 59-79 (ILLGIILLPVRALLVGLVLLL) form a helical; Signal-anchor for type II membrane protein membrane-spanning segment. At 80–544 (AWPFAVISTV…EEGTSGKKVD (465 aa)) the chain is on the lumenal side. Residues 146–151 (HSTFFD) carry the HXXXXD motif motif. Positions 220-223 (EGTC) match the EGTC motif motif. EF-hand domains lie at 391 to 426 (PVSD…LCNP) and 428 to 463 (NTED…SLGV). 10 residues coordinate Ca(2+): D404, N406, D408, S410, E415, D441, D443, D445, Y447, and E452. A compositionally biased stretch (polar residues) spans 520-530 (TAPSVASNKVS). Residues 520 to 544 (TAPSVASNKVSPESHEEGTSGKKVD) form a disordered region. The span at 531 to 544 (PESHEEGTSGKKVD) shows a compositional bias: basic and acidic residues.

It belongs to the 1-acyl-sn-glycerol-3-phosphate acyltransferase family.

The protein localises to the endoplasmic reticulum membrane. Its subcellular location is the golgi apparatus membrane. It localises to the cell membrane. The protein resides in the lipid droplet. It catalyses the reaction a 1-acyl-sn-glycero-3-phosphocholine + an acyl-CoA = a 1,2-diacyl-sn-glycero-3-phosphocholine + CoA. The catalysed reaction is a 1-O-alkyl-sn-glycero-3-phosphocholine + acetyl-CoA = a 1-O-alkyl-2-acetyl-sn-glycero-3-phosphocholine + CoA. The enzyme catalyses a 1-acyl-sn-glycero-3-phosphate + an acyl-CoA = a 1,2-diacyl-sn-glycero-3-phosphate + CoA. It carries out the reaction a 1-O-(1Z-alkenyl)-sn-glycero-3-phosphocholine + an acyl-CoA = a 1-O-(1Z-alkenyl)-2-acyl-sn-glycero-3-phosphocholine + CoA. It catalyses the reaction 1-hexadecanoyl-sn-glycero-3-phosphate + (9Z)-octadecenoyl-CoA = 1-hexadecanoyl-2-(9Z-octadecenoyl)-sn-glycero-3-phosphate + CoA. The catalysed reaction is 1-(9Z-octadecenoyl)-sn-glycero-3-phosphate + (9Z)-octadecenoyl-CoA = 1,2-di-(9Z-octadecenoyl)-sn-glycero-3-phosphate + CoA. The enzyme catalyses 1-(9Z-octadecenoyl)-sn-glycero-3-phosphate + hexadecanoyl-CoA = 1-(9Z)-octadecenoyl-2-hexadecanoyl-sn-glycero-3-phosphate + CoA. It carries out the reaction 1-heptadecanoyl-sn-glycero-3-phosphate + (9Z)-octadecenoyl-CoA = 1-heptadecanoyl-2-(9Z)-octadecenoyl-sn-glycero-3-phosphate + CoA. It catalyses the reaction 1-octadecanoyl-sn-glycero-3-phosphate + (9Z)-octadecenoyl-CoA = 1-octadecanoyl-2-(9Z-octadecenoyl)-sn-glycero-3-phosphate + CoA. The catalysed reaction is heptadecanoyl-CoA + 1-(9Z-octadecenoyl)-sn-glycero-3-phosphate = 1-(9Z)-octadecenoyl-2-heptadecanoyl-sn-glycero-3-phosphate + CoA. The enzyme catalyses 1-(9Z-octadecenoyl)-sn-glycero-3-phosphate + (9Z,12Z)-octadecadienoyl-CoA = 1-(9Z)-octadecenoyl-2-(9Z,12Z)-octadecadienoyl-sn-glycero-3-phosphate + CoA. It carries out the reaction 1-(9Z-octadecenoyl)-sn-glycero-3-phosphate + tetradecanoyl-CoA = 1-(9Z)-octadecenoyl-2-tetradecanoyl-sn-glycero-3-phosphate + CoA. It catalyses the reaction pentadecanoyl-CoA + 1-(9Z-octadecenoyl)-sn-glycero-3-phosphate = 1-(9Z)-octadecenoyl-2-pentadecanoyl-sn-glycero-3-phosphate + CoA. The catalysed reaction is nonadecanoyl-CoA + 1-(9Z-octadecenoyl)-sn-glycero-3-phosphate = 1-(9Z)-octadecenoyl-2-nonadecanoyl-sn-glycero-3-phosphate + CoA. The enzyme catalyses 1-hexadecanoyl-sn-glycero-3-phosphocholine + (9Z)-octadecenoyl-CoA = 1-hexadecanoyl-2-(9Z-octadecenoyl)-sn-glycero-3-phosphocholine + CoA. It carries out the reaction 1-O-hexadecyl-sn-glycero-3-phosphocholine + acetyl-CoA = 1-O-hexadecyl-2-acetyl-sn-glycero-3-phosphocholine + CoA. It catalyses the reaction 1-O-octadecyl-sn-glycero-3-phosphocholine + acetyl-CoA = 1-O-octadecyl-2-acetyl-sn-glycero-3-phosphocholine + CoA. The catalysed reaction is 1-hexadecanoyl-sn-glycero-3-phosphocholine + acetyl-CoA = 1-hexadecanoyl-2-acetyl-sn-glycero-3-phosphocholine + CoA. The enzyme catalyses 1-octadecanoyl-sn-glycero-3-phosphocholine + acetyl-CoA = 1-octadecanoyl-2-acetyl-sn-glycero-3-phosphocholine + CoA. It carries out the reaction a 1-O-(1Z-alkenyl)-sn-glycero-3-phosphocholine + acetyl-CoA = 1-O-(1Z)-alkenyl-2-acetyl-sn-glycero-3-phosphocholine + CoA. It catalyses the reaction 1-O-octadecyl-sn-glycero-3-phosphocholine + (5Z,8Z,11Z,14Z)-eicosatetraenoyl-CoA = 1-O-octadecyl-2-(5Z,8Z,11Z,14Z)-eicosatetraenoyl-sn-glycero-3-phosphocholine + CoA. The protein operates within lipid metabolism; phospholipid metabolism. In terms of biological role, exhibits both acyltransferase and acetyltransferase activities. Activity is calcium-dependent. Catalyzes the conversion of lysophosphatidylcholine (1-acyl-sn-glycero-3-phosphocholine or LPC) into phosphatidylcholine (1,2-diacyl-sn-glycero-3-phosphocholine or PC). Catalyzes the conversion 1-acyl-sn-glycerol-3-phosphate (lysophosphatidic acid or LPA) into 1,2-diacyl-sn-glycerol-3-phosphate (phosphatidic acid or PA) by incorporating an acyl moiety at the sn-2 position of the glycerol backbone. Involved in platelet-activating factor (PAF) biosynthesis by catalyzing the conversion of the PAF precursor, 1-O-alkyl-sn-glycero-3-phosphocholine (lyso-PAF) into 1-O-alkyl-2-acetyl-sn-glycero-3-phosphocholine (PAF). Also converts lyso-PAF to 1-O-alkyl-2-acyl-sn-glycero-3-phosphocholine (PC), a major component of cell membranes and a PAF precursor. Under resting conditions, acyltransferase activity is preferred. Upon acute inflammatory stimulus, acetyltransferase activity is enhanced and PAF synthesis increases. Involved in the regulation of lipid droplet number and size. The protein is Lysophosphatidylcholine acyltransferase 2 (Lpcat2) of Rattus norvegicus (Rat).